We begin with the raw amino-acid sequence, 88 residues long: Sec-independent protein translocase protein TatA (88 aa).

A helical transmembrane segment spans residues 1–21; that stretch reads MNLGPTEILLILVIVVLLFGA. The segment covering 46–56 has biased composition (basic and acidic residues); sequence SNDDQRYEEQQ. Positions 46–88 are disordered; sequence SNDDQRYEEQQQQRQIAAQAQQQVVNPVEIPQPQPTDIQRPQQ. Residues 57-68 are compositionally biased toward low complexity; sequence QQRQIAAQAQQQ.

Belongs to the TatA/E family. As to quaternary structure, the Tat system comprises two distinct complexes: a TatABC complex, containing multiple copies of TatA, TatB and TatC subunits, and a separate TatA complex, containing only TatA subunits. Substrates initially bind to the TatABC complex, which probably triggers association of the separate TatA complex to form the active translocon.

It is found in the cell membrane. Its function is as follows. Part of the twin-arginine translocation (Tat) system that transports large folded proteins containing a characteristic twin-arginine motif in their signal peptide across membranes. TatA could form the protein-conducting channel of the Tat system. The chain is Sec-independent protein translocase protein TatA from Corynebacterium diphtheriae (strain ATCC 700971 / NCTC 13129 / Biotype gravis).